Consider the following 391-residue polypeptide: Stearoyl-[acyl-carrier-protein] 9-desaturase 5, chloroplastic (391 aa).

Positions 1 to 20 (MAFAPSHTASPSYCGVAQGG) are disordered. A chloroplast-targeting transit peptide spans 1 to 32 (MAFAPSHTASPSYCGVAQGGRRSNGMSPVVAM). Residues Glu133, Glu171, His174, Glu224, Glu257, and His260 each coordinate Fe cation.

It belongs to the fatty acid desaturase type 2 family. Homodimer. It depends on Fe(2+) as a cofactor.

The protein localises to the plastid. The protein resides in the chloroplast. It carries out the reaction octadecanoyl-[ACP] + 2 reduced [2Fe-2S]-[ferredoxin] + O2 + 2 H(+) = (9Z)-octadecenoyl-[ACP] + 2 oxidized [2Fe-2S]-[ferredoxin] + 2 H2O. It participates in lipid metabolism; fatty acid metabolism. Converts stearoyl-ACP to oleoyl-ACP by introduction of a cis double bond between carbons 9 and 10 of the acyl chain. This chain is Stearoyl-[acyl-carrier-protein] 9-desaturase 5, chloroplastic, found in Oryza sativa subsp. indica (Rice).